An 89-amino-acid chain; its full sequence is HssA/B-like protein 21 (89 aa).

The protein belongs to the hssA/B family.

The protein is HssA/B-like protein 21 (hssl21) of Dictyostelium discoideum (Social amoeba).